The sequence spans 388 residues: Succinate--CoA ligase [ADP-forming] subunit beta (388 aa).

Residues 9-244 (KEIFRSMGVA…LEEEDPKEIE (236 aa)) form the ATP-grasp domain. Residues K46, 53–55 (GRG), E99, C102, and E107 each bind ATP. 2 residues coordinate Mg(2+): N199 and D213. Substrate contacts are provided by residues N264 and 321–323 (GIM).

Belongs to the succinate/malate CoA ligase beta subunit family. As to quaternary structure, heterotetramer of two alpha and two beta subunits. Requires Mg(2+) as cofactor.

It catalyses the reaction succinate + ATP + CoA = succinyl-CoA + ADP + phosphate. It carries out the reaction GTP + succinate + CoA = succinyl-CoA + GDP + phosphate. It functions in the pathway carbohydrate metabolism; tricarboxylic acid cycle; succinate from succinyl-CoA (ligase route): step 1/1. Functionally, succinyl-CoA synthetase functions in the citric acid cycle (TCA), coupling the hydrolysis of succinyl-CoA to the synthesis of either ATP or GTP and thus represents the only step of substrate-level phosphorylation in the TCA. The beta subunit provides nucleotide specificity of the enzyme and binds the substrate succinate, while the binding sites for coenzyme A and phosphate are found in the alpha subunit. The protein is Succinate--CoA ligase [ADP-forming] subunit beta of Staphylococcus aureus (strain bovine RF122 / ET3-1).